The following is a 213-amino-acid chain: Ribosomal RNA small subunit methyltransferase G (213 aa).

S-adenosyl-L-methionine is bound by residues Gly77, Phe82, 130 to 131 (IE), and Arg146.

It belongs to the methyltransferase superfamily. RNA methyltransferase RsmG family.

Its subcellular location is the cytoplasm. It carries out the reaction guanosine(527) in 16S rRNA + S-adenosyl-L-methionine = N(7)-methylguanosine(527) in 16S rRNA + S-adenosyl-L-homocysteine. Its function is as follows. Specifically methylates the N7 position of guanine in position 527 of 16S rRNA. This chain is Ribosomal RNA small subunit methyltransferase G, found in Bartonella tribocorum (strain CIP 105476 / IBS 506).